The chain runs to 667 residues: MAPTPKYTFTERAAAGNLSDAEILNSNNPTGSELPDESDVVVGGAGIHGLIYALHASKYKPNNLKISVIEKNTRPGYKIGESTLPIFYTWCKLHGISAAYLLRLFGLKDGLCFYFLDRENQGQYTDFCSVGAPGLVLASLQIERPMSELLFTILAQRNGVNVYHGREVDFKSTVVQGGGQGNKIAVSRGKYDSTPKTIDSALFVDATGRFRQFCSKKAPRHRFDGWNCNAFWGYFTAPKDESKIPFDLYEGDHTNHLCFPEGWVWVIRLPSWEGSLIANLMDMVTYILECADAGVPGDELPSSEELARMFGLKFQWVTSIGFAVRNDVKYPEDLSAYGTREAEQKFNYFVQKYELLQQFMSNFELIENLYGPGTTWFIRKTLAYQSPVVSGPGWLAIGDACGFTNPLYSPGINVGMSTSTWAAQLSHRIVEIGKSAPADAAESSIRKLLVPYDDYCKSLVPALEQMNRFNYVCYRDTRLGPQVACLWQFFAGIERYLSDVNIETFAHYAIKWVWGAMVPEYQQVAQKCIEHIETVPLDERLPDAMVDELLAFSNRIKSAAVAADDFSLRWDAILRSFDRSLNFVEGKTSRDIYTRQCSGCGAWLQLRPDWKKCHSCGLLGTEPQTAVTFDPPLTAEEEALLYAAWNTAPKYDPSKELKLPTPTRPAA.

FAD contacts are provided by His48, Glu70, Ile79, and Ser82. Lys108 is a catalytic residue. FAD is bound by residues Arg144, Val168, Asp399, and Ile412. Substrate is bound at residue Glu494. Zn(2+)-binding residues include Cys597, Cys600, Cys613, and Cys616. A flexible region region spans residues 621–646 (TEPQTAVTFDPPLTAEEEALLYAAWN).

It belongs to the flavin-dependent halogenase family. The cofactor is Zn(2+).

It carries out the reaction (+)-premalbrancheamide + 2 FAD + 2 chloride + 4 H(+) = (+)-malbrancheamide + 2 FADH2. It catalyses the reaction (+)-premalbrancheamide + FAD + chloride + 2 H(+) = (+)-malbrancheamide B + FADH2. The enzyme catalyses (+)-premalbrancheamide + FAD + chloride + 2 H(+) = (+)-isomalbrancheamide B + FADH2. The catalysed reaction is (+)-malbrancheamide B + FAD + chloride + 2 H(+) = (+)-malbrancheamide + FADH2. It carries out the reaction (+)-isomalbrancheamide B + FAD + chloride + 2 H(+) = (+)-malbrancheamide + FADH2. It catalyses the reaction (+)-premalbrancheamide + bromide + FAD + 2 H(+) = (+)-malbrancheamide C + FADH2. The enzyme catalyses (+)-premalbrancheamide + bromide + FAD + 2 H(+) = (+)-isomalbrancheamide C + FADH2. The catalysed reaction is (+)-malbrancheamide B + bromide + FAD + 2 H(+) = (+)-malbrancheamide D + FADH2. It carries out the reaction (+)-isomalbrancheamide B + bromide + FAD + 2 H(+) = (+)-isomalbrancheamide D + FADH2. Its pathway is alkaloid biosynthesis. Flavin-dependent halogenase; part of the gene cluster that mediates the biosynthesis of malbrancheamide, a dichlorinated fungal indole alkaloid that belongs to a family of natural products containing a characteristic bicyclo[2.2.2]diazaoctane core. The first step of malbrancheamide biosynthesis involves coupling of L-proline and L-tryptophan by malG, a bimodular NRPS, to produce L-Pro-L-Trp aldehyde through reductive offloading. This compound undergoes spontaneous cyclization and dehydration to give a dienamine which is reverse prenylated at C-2 by malE. The other prenyltransferase present in the cluster, malB, displays modest activity, suggesting that may be a redundant gene in the pathway. Subsequently, a [4+2] Diels-Alder cyclo-addition catalyzed by the bifunctional enzyme malC forms the characteristic bicyclo[2.2.2]diazaoctane ring of premalbrancheamid. Finally, the flavin-dependent halogenase malA catalyzes the iterative dichlorination of the indole ring of premalbrancheamide to yield C-9 monochlorinated malbrancheamide B, C-8 monochlorinated isomalbrancheamide B, and dichlorinated malbrancheamide. MalA is also able to brominate premalbrancheamide at C-9 to yield malbrancheamide C, and, to a lesser extend, at C-8 to yield isomalbrancheamide C. Finally, malA can brominate C-9 monochlorinated malbrancheamide B at C-8 to yield malbrancheamide D, or C-8 monochlorinated isomalbrancheamide B at C-9 to produce isomalbrancheamide D. The sequence is that of Flavin-dependent halogenase malA from Malbranchea aurantiaca.